Reading from the N-terminus, the 1309-residue chain is Tetratricopeptide repeat protein 41 (1309 aa).

TPR repeat units lie at residues 399–432 (PQLEMDFLNEDSNVLVFSLLIEVFMAAISLKPCI), 651–684 (WIQEKPNGLLYFQHQSLRNAVEHKMLGVTISVRE), 817–851 (LTFLLFLWGFLTLLGNRRANNLFSGAAPFLVSVQS), 859–892 (LKAQNAIGELYLDIGMMQKGLTYFQKAWSNLLRF), 989–1024 (MSYFSSAVLMEFLFSRSQRKQAIEYYKQVIKIKEKA), and 1042–1079 (SDTLCKLAGQLLSGDFCHHATMEAVSYLYRSLDLRAAH).

The protein localises to the cytoplasm. This chain is Tetratricopeptide repeat protein 41, found in Rattus norvegicus (Rat).